The following is a 312-amino-acid chain: Methionyl-tRNA formyltransferase (312 aa).

Residue 109–112 (SLLP) coordinates (6S)-5,6,7,8-tetrahydrofolate.

This sequence belongs to the Fmt family.

It catalyses the reaction L-methionyl-tRNA(fMet) + (6R)-10-formyltetrahydrofolate = N-formyl-L-methionyl-tRNA(fMet) + (6S)-5,6,7,8-tetrahydrofolate + H(+). Functionally, attaches a formyl group to the free amino group of methionyl-tRNA(fMet). The formyl group appears to play a dual role in the initiator identity of N-formylmethionyl-tRNA by promoting its recognition by IF2 and preventing the misappropriation of this tRNA by the elongation apparatus. The sequence is that of Methionyl-tRNA formyltransferase from Listeria monocytogenes serotype 4b (strain CLIP80459).